The sequence spans 286 residues: Ribose-phosphate pyrophosphokinase (286 aa).

Residues 34–36 and 91–92 each bind ATP; these read DGE and RQ. Mg(2+)-binding residues include His124 and Asp161. Residue Lys184 is part of the active site. Residues Arg186, Asp210, and 214–218 contribute to the D-ribose 5-phosphate site; that span reads STGGT.

The protein belongs to the ribose-phosphate pyrophosphokinase family. Class III (archaeal) subfamily. Requires Mg(2+) as cofactor.

The protein localises to the cytoplasm. It catalyses the reaction D-ribose 5-phosphate + ATP = 5-phospho-alpha-D-ribose 1-diphosphate + AMP + H(+). The protein operates within metabolic intermediate biosynthesis; 5-phospho-alpha-D-ribose 1-diphosphate biosynthesis; 5-phospho-alpha-D-ribose 1-diphosphate from D-ribose 5-phosphate (route I): step 1/1. Involved in the biosynthesis of the central metabolite phospho-alpha-D-ribosyl-1-pyrophosphate (PRPP) via the transfer of pyrophosphoryl group from ATP to 1-hydroxyl of ribose-5-phosphate (Rib-5-P). The protein is Ribose-phosphate pyrophosphokinase of Thermoplasma acidophilum (strain ATCC 25905 / DSM 1728 / JCM 9062 / NBRC 15155 / AMRC-C165).